The chain runs to 215 residues: Cytochrome b6 (215 aa).

A helical transmembrane segment spans residues 32–52 (IFYCLGGITLTCFLVQVATGF). C35 is a binding site for heme c. Residues H86 and H100 each contribute to the heme b site. Helical transmembrane passes span 90–110 (ASMM…TGGF), 116–136 (LTWV…VTGY), and 186–206 (LHTF…FLMI). Heme b-binding residues include H187 and H202.

It belongs to the cytochrome b family. PetB subfamily. The 4 large subunits of the cytochrome b6-f complex are cytochrome b6, subunit IV (17 kDa polypeptide, PetD), cytochrome f and the Rieske protein, while the 4 small subunits are PetG, PetL, PetM and PetN. The complex functions as a dimer. It depends on heme b as a cofactor. Heme c is required as a cofactor.

It is found in the plastid. It localises to the chloroplast thylakoid membrane. Its function is as follows. Component of the cytochrome b6-f complex, which mediates electron transfer between photosystem II (PSII) and photosystem I (PSI), cyclic electron flow around PSI, and state transitions. The chain is Cytochrome b6 from Marchantia polymorpha (Common liverwort).